A 368-amino-acid polypeptide reads, in one-letter code: Phospho-N-acetylmuramoyl-pentapeptide-transferase (368 aa).

Helical transmembrane passes span 34 to 54 (GAVVTGALFVFLFGPWIIDHL), 79 to 99 (TPTMGGLMILSGLVVSTVLWA), 102 to 122 (LNPYVWIVLAVTLGFGFVGFY), 140 to 160 (ARILIEAGIALVACYALVRLG), 176 to 196 (LVIKFGWMYVIFGAFVIVGAG), 207 to 227 (GLAIVPVMIASASFGLIAYLA), 247 to 267 (LAVLCGAVLGAGLGFLWFNAP), 271 to 291 (IFMGDTGSLALGGMLGSIAVA), 296 to 316 (IVLAVIGGLFVLEAVSVIVQV), and 345 to 365 (QIVIRFWIISVMLALVGLSTL).

The protein belongs to the glycosyltransferase 4 family. MraY subfamily. The cofactor is Mg(2+).

Its subcellular location is the cell inner membrane. It carries out the reaction UDP-N-acetyl-alpha-D-muramoyl-L-alanyl-gamma-D-glutamyl-meso-2,6-diaminopimeloyl-D-alanyl-D-alanine + di-trans,octa-cis-undecaprenyl phosphate = di-trans,octa-cis-undecaprenyl diphospho-N-acetyl-alpha-D-muramoyl-L-alanyl-D-glutamyl-meso-2,6-diaminopimeloyl-D-alanyl-D-alanine + UMP. It participates in cell wall biogenesis; peptidoglycan biosynthesis. Its function is as follows. Catalyzes the initial step of the lipid cycle reactions in the biosynthesis of the cell wall peptidoglycan: transfers peptidoglycan precursor phospho-MurNAc-pentapeptide from UDP-MurNAc-pentapeptide onto the lipid carrier undecaprenyl phosphate, yielding undecaprenyl-pyrophosphoryl-MurNAc-pentapeptide, known as lipid I. This Bradyrhizobium sp. (strain BTAi1 / ATCC BAA-1182) protein is Phospho-N-acetylmuramoyl-pentapeptide-transferase.